Consider the following 147-residue polypeptide: Interleukin-4 (147 aa).

Residues 1 to 19 (MGLRPQLAAILLCLLACTG) form the signal peptide. 4 N-linked (GlcNAc...) asparagine glycosylation sites follow: Asn20, Asn61, Asn90, and Asn117. Cystine bridges form between Cys47/Cys87 and Cys69/Cys114.

The protein belongs to the IL-4/IL-13 family.

It is found in the secreted. Its function is as follows. Participates in at least several B-cell activation processes as well as of other cell types. It is a costimulator of DNA-synthesis. It induces the expression of class II MHC molecules on resting B-cells. It enhances both secretion and cell surface expression of IgE and IgG1. It also regulates the expression of the low affinity Fc receptor for IgE (CD23) on both lymphocytes and monocytes. Positively regulates IL31RA expression in macrophages. Stimulates autophagy in dendritic cells by interfering with mTORC1 signaling and through the induction of RUFY4. This Mesocricetus auratus (Golden hamster) protein is Interleukin-4 (IL4).